Consider the following 119-residue polypeptide: Protein TusC (119 aa).

This sequence belongs to the DsrF/TusC family. In terms of assembly, heterohexamer, formed by a dimer of trimers. The hexameric TusBCD complex contains 2 copies each of TusB, TusC and TusD. The TusBCD complex interacts with TusE.

Its subcellular location is the cytoplasm. Functionally, part of a sulfur-relay system required for 2-thiolation of 5-methylaminomethyl-2-thiouridine (mnm(5)s(2)U) at tRNA wobble positions. This Escherichia coli O127:H6 (strain E2348/69 / EPEC) protein is Protein TusC.